The following is an 842-amino-acid chain: Histidine biosynthesis trifunctional protein (842 aa).

Positions Met1–Phe275 are phosphoribosyl-AMP cyclohydrolase. The phosphoribosyl-ATP pyrophosphohydrolase stretch occupies residues Cys276–Lys357. The histidinol dehydrogenase stretch occupies residues Tyr358–Ile842. Positions Lys380 to Ser403 are disordered. Basic and acidic residues predominate over residues Glu390–Ser403. Zn(2+) is bound by residues Gln667 and His670. Catalysis depends on residues Glu736 and His737. Residues Asp769 and His828 each coordinate Zn(2+).

In the C-terminal section; belongs to the histidinol dehydrogenase family. It depends on Zn(2+) as a cofactor.

It carries out the reaction 1-(5-phospho-beta-D-ribosyl)-5'-AMP + H2O = 1-(5-phospho-beta-D-ribosyl)-5-[(5-phospho-beta-D-ribosylamino)methylideneamino]imidazole-4-carboxamide. The enzyme catalyses 1-(5-phospho-beta-D-ribosyl)-ATP + H2O = 1-(5-phospho-beta-D-ribosyl)-5'-AMP + diphosphate + H(+). The catalysed reaction is L-histidinol + 2 NAD(+) + H2O = L-histidine + 2 NADH + 3 H(+). It functions in the pathway amino-acid biosynthesis; L-histidine biosynthesis; L-histidine from 5-phospho-alpha-D-ribose 1-diphosphate: step 2/9. The protein operates within amino-acid biosynthesis; L-histidine biosynthesis; L-histidine from 5-phospho-alpha-D-ribose 1-diphosphate: step 3/9. Its pathway is amino-acid biosynthesis; L-histidine biosynthesis; L-histidine from 5-phospho-alpha-D-ribose 1-diphosphate: step 9/9. The chain is Histidine biosynthesis trifunctional protein (HIS4) from Komagataella pastoris (Yeast).